The following is a 358-amino-acid chain: Acyl-CoA Delta-12 desaturase (358 aa).

The next 2 membrane-spanning stretches (helical) occupy residues 30–50 (IILY…AMFY) and 55–75 (TVFY…AGSH). 5 residues coordinate Fe cation: His-75, His-80, His-112, His-115, and His-116. The short motif at 75–80 (HRLWAH) is the Histidine box-1 element. Positions 112 to 116 (HRVHH) match the Histidine box-2 motif. 2 consecutive transmembrane segments (helical) span residues 175-195 (TFFA…YFWG) and 200-220 (TAFF…TFLV). Fe cation is bound by residues His-225, His-254, His-257, and His-258. Residues 254–258 (HNYHH) carry the Histidine box-3 motif.

Belongs to the fatty acid desaturase type 1 family. Requires Fe(2+) as cofactor.

Its subcellular location is the membrane. It catalyses the reaction (9Z)-octadecenoyl-CoA + 2 Fe(II)-[cytochrome b5] + O2 + 2 H(+) = (9Z,12Z)-octadecadienoyl-CoA + 2 Fe(III)-[cytochrome b5] + 2 H2O. The catalysed reaction is (9Z)-hexadecenoyl-CoA + 2 Fe(II)-[cytochrome b5] + O2 + 2 H(+) = (9Z,12Z)-hexadecadienoyl-CoA + 2 Fe(III)-[cytochrome b5] + 2 H2O. Catalyzes the formation of a Delta12 double bond, acting on monounsaturated fatty acyl substrates like palmitoleoyl-CoA ((9Z)-hexadecenoyl-CoA) and oleoyl-CoA ((9Z)-octadecenoyl-CoA) with higher desaturation activity on (9Z)-octadecenoyl-CoA than (9Z)-hexadecenoyl-CoA. Requires preexisting cis double bond at the Delta9 position of fatty acyls to be able to insert the Delta12 double bond. Delta12-desaturation of (9Z)-octadecenoyl-CoA in insects produces (9Z,12Z)-octadecadienoyl-CoA (linoleoyl-CoA) which may be used to supply precursors of crucial mediators of immunity and reproduction and other essential functions. This Tribolium castaneum (Red flour beetle) protein is Acyl-CoA Delta-12 desaturase.